The primary structure comprises 167 residues: Sperm acrosome membrane-associated protein 3 (167 aa).

The Cytoplasmic segment spans residues Met1–Arg63. The chain crosses the membrane as a helical; Signal-anchor for type II membrane protein span at residues Trp64–Ala84. Over Ser85–Ser167 the chain is Extracellular. Residues Lys88 to Ser167 form the C-type lysozyme domain. A disulfide bond links Cys151 and Cys166.

This sequence belongs to the glycosyl hydrolase 22 family. In terms of assembly, interacts with ASTL. The processed form derives from the membrane form by proteolytic processing.

It is found in the cytoplasmic vesicle. The protein resides in the secretory vesicle. Its subcellular location is the acrosome membrane. Functionally, sperm surface membrane protein that may be involved in sperm-egg plasma membrane adhesion and fusion during fertilization. It could be a potential receptor for the egg oligosaccharide residue N-acetylglucosamine, which is present in the extracellular matrix over the egg plasma membrane. The processed form has no detectable bacteriolytic activity in vitro. This chain is Sperm acrosome membrane-associated protein 3 (SPACA3), found in Pongo pygmaeus (Bornean orangutan).